Here is a 1530-residue protein sequence, read N- to C-terminus: Coiled-coil domain-containing protein 141 (1530 aa).

The Spectrin repeat unit spans residues 49 to 127 (NLLEIGSSQD…SMLERRRELL (79 aa)). Phosphothreonine is present on Thr91. 3 coiled-coil regions span residues 220 to 251 (IDSL…VLQL), 758 to 785 (LKEK…YEEI), and 865 to 967 (AKSL…VNKK). Disordered regions lie at residues 1153-1240 (SEER…PASS), 1259-1285 (LGKA…DTFT), 1324-1356 (PREV…SNVT), and 1369-1403 (SPGL…SVVS). Over residues 1334–1345 (PSSQAQEISLGT) the composition is skewed to polar residues. Positions 1409-1497 (PHFSRLLSNV…GTLSSKAILH (89 aa)) constitute an Ig-like domain.

Interacts with DISC1. Interacts preferentially with phosphorylated forms of myosin regulatory light chain (MRLC). Interacts (via the N-terminal region) with HDAC6; inhibits the deacetylase activity of HDAC6. Interacts with KIBRA (via the C-terminal region); retains AMPAR in the cytosol after internalization. In terms of processing, ubiquitinated and degradated by the CDC20-APC/C pathway. During brain development, CDC20-APC/C complex degrades CCDC141 after centrosome translocation into the dilated area. CCDC141 is restabilized in the dilation until the centrosome enters the dilation, at which point it is once again immediately destabilized by CDC20-APC/C complex. The oscillatory regulation of CCDC141 protein is needed for proper cortical migration. Post-translationally, phosphorylation at Thr-91 by PLK1 affects CCDC141 degradation.

The protein resides in the cytoplasm. The protein localises to the cytoskeleton. It is found in the microtubule organizing center. It localises to the centrosome. Functionally, plays a critical role in cortical radial and GnRH neurons migration during brain development. Regulates cortical radial migration by negatively controlling the activity of histone deacetylase 6 (HDAC6) and promotes centrosome maturation. CAMDI is required for dilation formation of cortical neurons during radial migration. Plays a critical role in learning and memory performance through regulation of AMPA-selective glutamate receptors (AMPARs) cell surface expression in competition with KIBRA. This chain is Coiled-coil domain-containing protein 141, found in Rattus norvegicus (Rat).